The following is a 449-amino-acid chain: Allantoinase (449 aa).

Residues His-61, His-63, Lys-148, His-184, His-240, and Asp-313 each coordinate Zn(2+). N6-carboxylysine is present on Lys-148.

It belongs to the metallo-dependent hydrolases superfamily. Allantoinase family. In terms of assembly, homotetramer. Requires Zn(2+) as cofactor. Post-translationally, carboxylation allows a single lysine to coordinate two zinc ions.

The catalysed reaction is (S)-allantoin + H2O = allantoate + H(+). Its pathway is nitrogen metabolism; (S)-allantoin degradation; allantoate from (S)-allantoin: step 1/1. Its function is as follows. Catalyzes the conversion of allantoin (5-ureidohydantoin) to allantoic acid by hydrolytic cleavage of the five-member hydantoin ring. In Desulfitobacterium hafniense (strain Y51), this protein is Allantoinase.